Consider the following 327-residue polypeptide: Autoinducer 2 import system permease protein LsrD (327 aa).

9 helical membrane passes run 3 to 23 (LNWETTLLILLVLEILLFGAI), 41 to 61 (ICIGIVALPLTLVIISGGIDI), 63 to 83 (LGSTIGLCAIALGVMMQFGLP), 86 to 106 (LAVPLTLLLGLLCGLFNAALI), 114 to 134 (LVITLGTLYLYGGGALLLSGL), 158 to 178 (VLGLPIPLVLFAVITFFFWLI), 211 to 231 (ALYGLVGVASAIAALVMVSYF), 257 to 277 (IYGGSGSVIGTALAALLVGYL), and 283 to 303 (MVGIPNQVSSALSGALLVVVV).

The protein belongs to the binding-protein-dependent transport system permease family. AraH/RbsC subfamily. As to quaternary structure, the complex is composed of two ATP-binding proteins (LsrA), two transmembrane proteins (LsrC and LsrD) and a solute-binding protein (LsrB).

The protein resides in the cell inner membrane. Part of the ABC transporter complex LsrABCD involved in autoinducer 2 (AI-2) import. Probably responsible for the translocation of the substrate across the membrane. This is Autoinducer 2 import system permease protein LsrD (lsrD) from Enterobacter sp. (strain 638).